Reading from the N-terminus, the 366-residue chain is Bacteriochlorophyll a protein (366 aa).

Bacteriochlorophyll a-binding residues include H110, H145, H290, H297, and H298.

In terms of assembly, homotrimer. Each subunit contains 7 molecules of bacteriochlorophyll a.

Its function is as follows. Intermediary in the transfer of excitation energy from the chlorophyll to the reaction centers. This Prosthecochloris aestuarii protein is Bacteriochlorophyll a protein.